We begin with the raw amino-acid sequence, 150 residues long: Macrodomain Ter protein (150 aa).

The protein belongs to the MatP family. Homodimer.

Its subcellular location is the cytoplasm. Required for spatial organization of the terminus region of the chromosome (Ter macrodomain) during the cell cycle. Prevents early segregation of duplicated Ter macrodomains during cell division. Binds specifically to matS, which is a 13 bp signature motif repeated within the Ter macrodomain. This is Macrodomain Ter protein from Escherichia coli O81 (strain ED1a).